A 72-amino-acid chain; its full sequence is Rubredoxin (72 aa).

Residues 19-72 (DAVLECKICWQRYDPAEGDPVWQIPPGTPFAALPAHWRCPRCDGDREQFMVVDG) form the Rubredoxin-like domain. 4 residues coordinate Fe cation: Cys-24, Cys-27, Cys-57, and Cys-60.

This sequence belongs to the rubredoxin family. The cofactor is Fe(3+).

Its function is as follows. Rubredoxin is a small nonheme, iron protein lacking acid-labile sulfide. Its single Fe, chelated to 4 Cys, functions as an electron acceptor and may also stabilize the conformation of the molecule. Could be involved in hydrogenase-linked redox processes. This chain is Rubredoxin (hoxR), found in Azotobacter vinelandii.